The sequence spans 741 residues: uncharacterized protein (741 aa).

A signal peptide spans 1-22 (MKSVKIIIILALALLIQISHIA).

This is an uncharacterized protein from Archaeoglobus fulgidus (strain ATCC 49558 / DSM 4304 / JCM 9628 / NBRC 100126 / VC-16).